Reading from the N-terminus, the 902-residue chain is Chloride channel protein 2 (902 aa).

Topologically, residues 1-89 (MAASAAAAGE…RCHKFLVSRV (89 aa)) are cytoplasmic. The essential for channel gating by both voltage and cell volume stretch occupies residues 18–36 (QYEQTLMYGRYTQELGAFA). The residue at position 22 (Thr-22) is a Phosphothreonine. The interval 38-51 (EEAARIRLGGPEPW) is modulates channel gating by both voltage and cell volume. 2 consecutive transmembrane segments (helical) span residues 90 to 123 (GEDW…AQQW) and 132 to 157 (ILLQ…TQIL). Positions 163–167 (GSGIP) match the Selectivity filter part_1 motif. Positions 166-173 (IPEMKTIL) form an intramembrane region, helical. 2 helical membrane passes run 182–200 (LTLK…ALGS) and 207–225 (EGPF…SKFL). The Selectivity filter part_2 motif lies at 205-209 (GKEGP). 2 intramembrane regions (helical) span residues 241-253 (MLAA…VGCC) and 257-265 (PIGGVLFSI). The next 5 membrane-spanning stretches (helical) occupy residues 277–297 (YWRG…LAVW), 323–351 (LPAF…VQVM), 360–379 (FLMR…ISTL), 431–451 (ANVF…SALA), and 459–482 (GAFM…MAAW). Positions 459-463 (GAFMP) match the Selectivity filter part_3 motif. Positions 499–513 (GGYAVVGAAALAGAV) form an intramembrane region, helical. The segment at residues 514-515 (TH) is an intramembrane region (note=Loop between two helices). The segment at residues 516–527 (TVSTAVIVFELT) is an intramembrane region (helical). An intramembrane region (note=Loop between two helices) is located at residues 528–532 (GQIAH). A helical membrane pass occupies residues 533–550 (ILPVMIAVILANAVAQSL). Residues 551-902 (QPSLYDSIIR…SPSDSDDKCQ (352 aa)) are Cytoplasmic-facing. The CBS 1 domain occupies 586 to 644 (MVRDVPYVALNCTFRDLRLALHRTKGRMLALVESSESMILLGSIERSQVVTLLGAQLSA). The tract at residues 648–748 (RQHIQERRKA…TSDLEKPESC (101 aa)) is disordered. 2 stretches are compositionally biased toward polar residues: residues 671–683 (PESS…NTED) and 706–719 (SNAS…TGSM). A CBS 2 domain is found at 794-854 (IDPAPFQLVE…GSVTAQGVKV (61 aa)). The Basolateral membrane sorting motif lies at 816–817 (LL). A disordered region spans residues 860-902 (SFRDSATSSSDTETTEVHALWGPHSCHGLPRDGSPSDSDDKCQ).

Belongs to the chloride channel (TC 2.A.49) family. ClC-2/CLCN2 subfamily. In terms of assembly, homodimer. Interacts with auxiliary subunit HEPACAM.

The protein localises to the cell membrane. Its subcellular location is the basolateral cell membrane. It localises to the cell projection. The protein resides in the dendritic spine membrane. It is found in the axon. The catalysed reaction is chloride(in) = chloride(out). It carries out the reaction thiocyanate(in) = thiocyanate(out). It catalyses the reaction bromide(in) = bromide(out). The enzyme catalyses nitrate(in) = nitrate(out). The catalysed reaction is iodide(out) = iodide(in). Its activity is regulated as follows. Common gate kinetics are down-regulated by intracellular ATP. Inhibited by AK-42, a derivative of meclofenamate. Inhibited by Cd(2+). Inhibited by Zn(2+) and PKC activation. Inhibited at acidic pH. CCLN2:HEPACAM channel conductance is up-regulated upon hypo-osmolarity. In terms of biological role, voltage-gated and osmosensitive chloride channel. Forms a homodimeric channel where each subunit has its own ion conduction pathway. Conducts double-barreled currents controlled by two types of gates, two fast glutamate gates that control each subunit independently and a slow common gate that opens and shuts off both subunits simultaneously. Displays inward rectification currents activated upon membrane hyperpolarization and extracellular hypotonicity. Contributes to chloride conductance involved in neuron excitability. In hippocampal neurons, generates a significant part of resting membrane conductance and provides an additional chloride efflux pathway to prevent chloride accumulation in dendrites upon GABA receptor activation. In glia, associates with the auxiliary subunit HEPACAM/GlialCAM at astrocytic processes and myelinated fiber tracts where it may regulate transcellular chloride flux buffering extracellular chloride and potassium concentrations. Regulates aldosterone production in adrenal glands. The opening of CLCN2 channels at hyperpolarized membrane potentials in the glomerulosa causes cell membrane depolarization, activation of voltage-gated calcium channels and increased expression of aldosterone synthase, the rate-limiting enzyme for aldosterone biosynthesis. Contributes to chloride conductance in retinal pigment epithelium involved in phagocytosis of shed photoreceptor outer segments and photoreceptor renewal. Conducts chloride currents at the basolateral membrane of epithelial cells with a role in chloride reabsorption rather than secretion. Permeable to small monovalent anions with chloride &gt; thiocyanate &gt; bromide &gt; nitrate &gt; iodide ion selectivity. This is Chloride channel protein 2 (CLCN2) from Cavia porcellus (Guinea pig).